A 340-amino-acid polypeptide reads, in one-letter code: DNA-directed RNA polymerase subunit alpha (340 aa).

Residues 1-236 (MLSLSKNWNT…EQLQLFIAFE (236 aa)) form an alpha N-terminal domain (alpha-NTD) region. The alpha C-terminal domain (alpha-CTD) stretch occupies residues 251-340 (FSPYLLKRVD…LSKRYEDSYN (90 aa)).

Belongs to the RNA polymerase alpha chain family. Homodimer. The RNAP catalytic core consists of 2 alpha, 1 beta, 1 beta' and 1 omega subunit. When a sigma factor is associated with the core the holoenzyme is formed, which can initiate transcription.

The enzyme catalyses RNA(n) + a ribonucleoside 5'-triphosphate = RNA(n+1) + diphosphate. Functionally, DNA-dependent RNA polymerase catalyzes the transcription of DNA into RNA using the four ribonucleoside triphosphates as substrates. This is DNA-directed RNA polymerase subunit alpha from Rickettsia typhi (strain ATCC VR-144 / Wilmington).